We begin with the raw amino-acid sequence, 844 residues long: Proto-oncogene vav (844 aa).

One can recognise a Calponin-homology (CH) domain in the interval 1–119 (MELWRQCTHW…YTLSALSWTP (119 aa)). The DH domain maps to 193–372 (KRCCCLREIQ…RDLAQCVNEV (180 aa)). Residues 401–503 (RPKIDGELKI…WMEQFEMAIS (103 aa)) form the PH domain. The segment at 514–563 (GHDFQMFSFEETTSCKACQMLLRGTFYQGYRCQRCRAPAHKECLGRVPPC) adopts a Phorbol-ester/DAG-type zinc-finger fold. Residues 567–589 (GQDYSGTMKKDKPHRRAQDKKRN) form a disordered region. One can recognise an SH3 1 domain in the interval 591–659 (LGLPKMEVCQ…PCNRVKPYVH (69 aa)). The 95-residue stretch at 670–764 (WYAGPMERAG…SLDTTLQFPF (95 aa)) folds into the SH2 domain. An SH3 2 domain is found at 781-841 (KIFGTAKARY…PSNYVEEDYS (61 aa)). Phosphotyrosine is present on residues Y825 and Y843.

In terms of assembly, interacts with SHB. Interacts with APS, DOCK2, GRB2, GRB3, DOCK2, SLA, TEC and ZNF655/VIK. Interacts with SIAH2; without leading to its degradation. Associates with BLNK, PLCG1, GRB2 and NCK1 in a B-cell antigen receptor-dependent fashion. Interacts with CBLB; which inhibits tyrosine phosphorylation and down-regulates activity. May interact with CCPG1. Interacts with CLNK. Interacts with THEMIS2. Interacts with NEK3 and this interaction is prolactin-dependent. Interacts with ITK. Interacts with PTK2B/PYK2. Interacts with HCK. Interacts with PTK2B/PYK2. Interacts (via SH2 domain) with SYK. Interacts with ANKRD54. Interacts with CD6. Interacts with LCP2; this interaction plays a role in TCR-mediated cytokine production. Post-translationally, phosphorylated by FYN. Phosphorylated on tyrosine residues by HCK in response to IFNG and bacterial lipopolysaccharide (LPS).

Functionally, couples tyrosine kinase signals with the activation of the Rho/Rac GTPases, thus leading to cell differentiation and/or proliferation. This is Proto-oncogene vav (VAV1) from Bos taurus (Bovine).